Consider the following 60-residue polypeptide: Large ribosomal subunit protein bL32 (60 aa).

Residues 1–23 (MAVPRNRHSNARKNIRRSHHAKK) form a disordered region.

This sequence belongs to the bacterial ribosomal protein bL32 family.

The protein is Large ribosomal subunit protein bL32 of Chlamydia caviae (strain ATCC VR-813 / DSM 19441 / 03DC25 / GPIC) (Chlamydophila caviae).